A 451-amino-acid polypeptide reads, in one-letter code: Phosphoglucosamine mutase (451 aa).

The active-site Phosphoserine intermediate is the Ser-107. The Mg(2+) site is built by Ser-107, Asp-246, Asp-248, and Asp-250. The residue at position 107 (Ser-107) is a Phosphoserine.

This sequence belongs to the phosphohexose mutase family. Requires Mg(2+) as cofactor. Activated by phosphorylation.

It carries out the reaction alpha-D-glucosamine 1-phosphate = D-glucosamine 6-phosphate. Its function is as follows. Catalyzes the conversion of glucosamine-6-phosphate to glucosamine-1-phosphate. The chain is Phosphoglucosamine mutase from Burkholderia ambifaria (strain MC40-6).